Consider the following 301-residue polypeptide: GTPase Era (301 aa).

In terms of domain architecture, Era-type G spans 7–175 (YCGFIAIVGR…AAIVRKHLPE (169 aa)). Residues 15–22 (GRPNVGKS) form a G1 region. GTP is bound at residue 15–22 (GRPNVGKS). Residues 41–45 (QTTRH) are G2. Positions 62 to 65 (DTPG) are G3. Residues 62 to 66 (DTPGL) and 124 to 127 (NKVD) contribute to the GTP site. The interval 124-127 (NKVD) is G4. The tract at residues 154 to 156 (ISA) is G5. The KH type-2 domain occupies 206-283 (LGAELPYSVT…HLELWVKVKS (78 aa)).

This sequence belongs to the TRAFAC class TrmE-Era-EngA-EngB-Septin-like GTPase superfamily. Era GTPase family. In terms of assembly, monomer.

It localises to the cytoplasm. Its subcellular location is the cell inner membrane. An essential GTPase that binds both GDP and GTP, with rapid nucleotide exchange. Plays a role in 16S rRNA processing and 30S ribosomal subunit biogenesis and possibly also in cell cycle regulation and energy metabolism. The sequence is that of GTPase Era from Cronobacter sakazakii (strain ATCC BAA-894) (Enterobacter sakazakii).